A 184-amino-acid polypeptide reads, in one-letter code: Photosystem I assembly protein Ycf4 (184 aa).

Transmembrane regions (helical) follow at residues 22 to 42 (LCWAIILFLGSLGFLLVGTSS) and 57 to 77 (ILFFPQGIVMSFYGIAGLFIS).

This sequence belongs to the Ycf4 family.

The protein resides in the plastid. It is found in the chloroplast thylakoid membrane. In terms of biological role, seems to be required for the assembly of the photosystem I complex. The polypeptide is Photosystem I assembly protein Ycf4 (Daucus carota (Wild carrot)).